The following is a 215-amino-acid chain: Probable phosphoglycerate mutase GpmB (215 aa).

Residues 8 to 15 (RHGETQWN), 21 to 22 (QG), R58, R60, 82 to 85 (ELNM), 104 to 105 (RR), and 151 to 152 (GI) contribute to the substrate site. H9 functions as the Tele-phosphohistidine intermediate in the catalytic mechanism. The active-site Proton donor/acceptor is E82.

It belongs to the phosphoglycerate mutase family. GpmB subfamily.

The catalysed reaction is (2R)-2-phosphoglycerate = (2R)-3-phosphoglycerate. Its pathway is carbohydrate degradation; glycolysis; pyruvate from D-glyceraldehyde 3-phosphate: step 3/5. The chain is Probable phosphoglycerate mutase GpmB from Shigella boydii serotype 18 (strain CDC 3083-94 / BS512).